The following is a 272-amino-acid chain: ATP synthase subunit a (272 aa).

5 helical membrane passes run 41 to 61 (VLNIDSMFFSVVLGLVFLVLF), 101 to 121 (VIAPLALTIFVWVFLMNFMDL), 147 to 167 (DVNITLSMALGVFVLILFYSI), 221 to 241 (LIFILIAGLLPWWSQWILSVP), and 243 to 263 (AIFHILIISLQAFIFMVLTIV).

It belongs to the ATPase A chain family. In terms of assembly, F-type ATPases have 2 components, CF(1) - the catalytic core - and CF(0) - the membrane proton channel. CF(1) has five subunits: alpha(3), beta(3), gamma(1), delta(1), epsilon(1). CF(0) has three main subunits: a(1), b(2) and c(9-12). The alpha and beta chains form an alternating ring which encloses part of the gamma chain. CF(1) is attached to CF(0) by a central stalk formed by the gamma and epsilon chains, while a peripheral stalk is formed by the delta and b chains.

Its subcellular location is the cell inner membrane. Its function is as follows. Key component of the proton channel; it plays a direct role in the translocation of protons across the membrane. This chain is ATP synthase subunit a, found in Erwinia tasmaniensis (strain DSM 17950 / CFBP 7177 / CIP 109463 / NCPPB 4357 / Et1/99).